The chain runs to 227 residues: Cytochrome c oxidase subunit 2 (227 aa).

The Mitochondrial intermembrane segment spans residues 1-14 (MAHAVQYGFQDAAA). Residues 15–45 (PIMEELLYFHDHTLMIVFMISSLVLYIISLM) traverse the membrane as a helical segment. The Mitochondrial matrix segment spans residues 46-59 (LSTELTHTSTMDAQ). Residues 60-87 (EVETVWTILPAVILILIALPSLRILYMM) traverse the membrane as a helical segment. The Mitochondrial intermembrane portion of the chain corresponds to 88-227 (DEIETPSLTL…YFEEWLLKTL (140 aa)). 6 residues coordinate Cu cation: His161, Cys196, Glu198, Cys200, His204, and Met207. Glu198 lines the Mg(2+) pocket. A Phosphotyrosine modification is found at Tyr218.

This sequence belongs to the cytochrome c oxidase subunit 2 family. Component of the cytochrome c oxidase (complex IV, CIV), a multisubunit enzyme composed of 14 subunits. The complex is composed of a catalytic core of 3 subunits MT-CO1, MT-CO2 and MT-CO3, encoded in the mitochondrial DNA, and 11 supernumerary subunits COX4I, COX5A, COX5B, COX6A, COX6B, COX6C, COX7A, COX7B, COX7C, COX8 and NDUFA4, which are encoded in the nuclear genome. The complex exists as a monomer or a dimer and forms supercomplexes (SCs) in the inner mitochondrial membrane with NADH-ubiquinone oxidoreductase (complex I, CI) and ubiquinol-cytochrome c oxidoreductase (cytochrome b-c1 complex, complex III, CIII), resulting in different assemblies (supercomplex SCI(1)III(2)IV(1) and megacomplex MCI(2)III(2)IV(2)). Found in a complex with TMEM177, COA6, COX18, COX20, SCO1 and SCO2. Interacts with TMEM177 in a COX20-dependent manner. Interacts with COX20. Interacts with COX16. Cu cation is required as a cofactor.

Its subcellular location is the mitochondrion inner membrane. The enzyme catalyses 4 Fe(II)-[cytochrome c] + O2 + 8 H(+)(in) = 4 Fe(III)-[cytochrome c] + 2 H2O + 4 H(+)(out). Component of the cytochrome c oxidase, the last enzyme in the mitochondrial electron transport chain which drives oxidative phosphorylation. The respiratory chain contains 3 multisubunit complexes succinate dehydrogenase (complex II, CII), ubiquinol-cytochrome c oxidoreductase (cytochrome b-c1 complex, complex III, CIII) and cytochrome c oxidase (complex IV, CIV), that cooperate to transfer electrons derived from NADH and succinate to molecular oxygen, creating an electrochemical gradient over the inner membrane that drives transmembrane transport and the ATP synthase. Cytochrome c oxidase is the component of the respiratory chain that catalyzes the reduction of oxygen to water. Electrons originating from reduced cytochrome c in the intermembrane space (IMS) are transferred via the dinuclear copper A center (CU(A)) of subunit 2 and heme A of subunit 1 to the active site in subunit 1, a binuclear center (BNC) formed by heme A3 and copper B (CU(B)). The BNC reduces molecular oxygen to 2 water molecules using 4 electrons from cytochrome c in the IMS and 4 protons from the mitochondrial matrix. The protein is Cytochrome c oxidase subunit 2 (MT-CO2) of Galago senegalensis (Northern lesser bushbaby).